Reading from the N-terminus, the 527-residue chain is EGF domain-specific O-linked N-acetylglucosamine transferase (527 aa).

The signal sequence occupies residues 1–17 (MFMLLVFGALLPEVPLS). A Required for optimal activity motif is present at residues 295 to 297 (DYD). N-linked (GlcNAc...) asparagine glycosylation occurs at Asn-354. The Prevents secretion from ER signature appears at 524 to 527 (HDEL).

This sequence belongs to the glycosyltransferase 61 family.

It localises to the endoplasmic reticulum lumen. The enzyme catalyses L-seryl-[protein] + UDP-N-acetyl-alpha-D-glucosamine = 3-O-(N-acetyl-beta-D-glucosaminyl)-L-seryl-[protein] + UDP + H(+). It catalyses the reaction L-threonyl-[protein] + UDP-N-acetyl-alpha-D-glucosamine = 3-O-(N-acetyl-beta-D-glucosaminyl)-L-threonyl-[protein] + UDP + H(+). Its function is as follows. Catalyzes the transfer of a single N-acetylglucosamine from UDP-GlcNAc to a serine or threonine residue in extracellular proteins resulting in their modification with a beta-linked N-acetylglucosamine (O-GlcNAc). Specifically glycosylates the Thr residue located between the fifth and sixth conserved cysteines of folded EGF-like domains. The polypeptide is EGF domain-specific O-linked N-acetylglucosamine transferase (EOGT) (Bos taurus (Bovine)).